An 843-amino-acid chain; its full sequence is Protein P (843 aa).

The interval 1–177 (MPLSYQHFRK…FCGSPYSWEQ (177 aa)) is terminal protein domain (TP). The interval 178-346 (ELQHGRLVFQ…YCLSHIVNLL (169 aa)) is spacer. The polymerase/reverse transcriptase domain (RT) stretch occupies residues 347–690 (EDWGPCTEHG…YMNLYPVARQ (344 aa)). A Reverse transcriptase domain is found at 357–600 (EHHIRIPRTP…YSLNFMGYVI (244 aa)). Mg(2+)-binding residues include Asp429, Asp551, and Asp552.

It belongs to the hepadnaviridae P protein family.

It carries out the reaction DNA(n) + a 2'-deoxyribonucleoside 5'-triphosphate = DNA(n+1) + diphosphate. It catalyses the reaction Endonucleolytic cleavage to 5'-phosphomonoester.. With respect to regulation, activated by host HSP70 and HSP40 in vitro to be able to bind the epsilon loop of the pgRNA. Because deletion of the RNase H region renders the protein partly chaperone-independent, the chaperones may be needed indirectly to relieve occlusion of the RNA-binding site by this domain. Inhibited by several reverse-transcriptase inhibitors: Lamivudine, Adefovir and Entecavir. In terms of biological role, multifunctional enzyme that converts the viral RNA genome into dsDNA in viral cytoplasmic capsids. This enzyme displays a DNA polymerase activity that can copy either DNA or RNA templates, and a ribonuclease H (RNase H) activity that cleaves the RNA strand of RNA-DNA heteroduplexes in a partially processive 3'- to 5'-endonucleasic mode. Neo-synthesized pregenomic RNA (pgRNA) are encapsidated together with the P protein, and reverse-transcribed inside the nucleocapsid. Initiation of reverse-transcription occurs first by binding the epsilon loop on the pgRNA genome, and is initiated by protein priming, thereby the 5'-end of (-)DNA is covalently linked to P protein. Partial (+)DNA is synthesized from the (-)DNA template and generates the relaxed circular DNA (RC-DNA) genome. After budding and infection, the RC-DNA migrates in the nucleus, and is converted into a plasmid-like covalently closed circular DNA (cccDNA). The activity of P protein does not seem to be necessary for cccDNA generation, and is presumably released from (+)DNA by host nuclear DNA repair machinery. The sequence is that of Protein P from Homo sapiens (Human).